The chain runs to 446 residues: Exodeoxyribonuclease 7 large subunit (446 aa).

This sequence belongs to the XseA family. As to quaternary structure, heterooligomer composed of large and small subunits.

Its subcellular location is the cytoplasm. The catalysed reaction is Exonucleolytic cleavage in either 5'- to 3'- or 3'- to 5'-direction to yield nucleoside 5'-phosphates.. Its function is as follows. Bidirectionally degrades single-stranded DNA into large acid-insoluble oligonucleotides, which are then degraded further into small acid-soluble oligonucleotides. The protein is Exodeoxyribonuclease 7 large subunit of Streptococcus equi subsp. zooepidemicus (strain MGCS10565).